Reading from the N-terminus, the 598-residue chain is Nuclear receptor subfamily 4 group A member 2 (598 aa).

Positions 1–22 (MPCVQAQYGSSPQGASPASQGY) are disordered. Positions 7-18 (QYGSSPQGASPA) are enriched in polar residues. A DNA-binding region (nuclear receptor) is located at residues 260-335 (EGLCAVCGDN…VGMVKEVVRT (76 aa)). 2 NR C4-type zinc fingers span residues 263–283 (CAVC…CEGC) and 299–318 (CLAN…CQYC). The short motif at 287 to 314 (FKRTVQKNAKYVCLANKNCPVDKRRRNR) is the Bipartite nuclear localization signal (NLS1) element. The tract at residues 337–361 (SLKGRRGRLPSKPKSPQEPSPPSPP) is disordered. A Nuclear localization signal (NLS1) motif is present at residues 338–350 (LKGRRGRLPSKPK). The span at 352–361 (PQEPSPPSPP) shows a compositional bias: pro residues. In terms of domain architecture, NR LBD spans 360–595 (PPVSLISALV…AIIDKLFLDT (236 aa)). The nuclear export sequence (NES1) signature appears at 443–452 (FLELFVLRLA). A nuclear export sequence (NES2) motif is present at residues 568–577 (QGLQRIFYLK).

Belongs to the nuclear hormone receptor family. In terms of assembly, interacts with SFPQ, NCOR2, SIN3A and HADC1. The interaction with NCOR2 increases in the absence of PITX3. Interacts with PER2.

The protein resides in the cytoplasm. It localises to the nucleus. Its function is as follows. Transcriptional regulator which is important for the differentiation and maintenance of meso-diencephalic dopaminergic (mdDA) neurons during development. It is crucial for expression of a set of genes such as SLC6A3, SLC18A2, TH and DRD2 which are essential for development of mdDA neurons. This chain is Nuclear receptor subfamily 4 group A member 2 (NR4A2), found in Pongo abelii (Sumatran orangutan).